The following is a 112-amino-acid chain: UPF0342 protein STER_0693 (112 aa).

The protein belongs to the UPF0342 family.

This chain is UPF0342 protein STER_0693, found in Streptococcus thermophilus (strain ATCC BAA-491 / LMD-9).